We begin with the raw amino-acid sequence, 109 residues long: Protein FAM32A-like (109 aa).

A disordered region spans residues 1–48 (MSEYKSVQKGSLKLKGVSLPSKKKKKKNKEMKRLEEQVLTSENEEGTK). The span at 9-20 (KGSLKLKGVSLP) shows a compositional bias: low complexity. Residues 21 to 30 (SKKKKKKNKE) show a composition bias toward basic residues.

Belongs to the FAM32 family.

The protein resides in the nucleus. Functionally, may induce G2 arrest and apoptosis. May also increase cell sensitivity to apoptotic stimuli. The sequence is that of Protein FAM32A-like (fam32al) from Danio rerio (Zebrafish).